A 331-amino-acid polypeptide reads, in one-letter code: Hyaluronidase A (331 aa).

2 disulfide bridges follow: C19–C308 and C185–C197. N79 and N99 each carry an N-linked (GlcNAc...) asparagine glycan. The Proton donor role is filled by E109. N-linked (GlcNAc...) asparagine glycosylation is present at N127. N-linked (GlcNAc...) asparagine glycosylation is present at N325.

This sequence belongs to the glycosyl hydrolase 56 family. In terms of tissue distribution, expressed by the venom gland.

The protein localises to the secreted. The catalysed reaction is Random hydrolysis of (1-&gt;4)-linkages between N-acetyl-beta-D-glucosamine and D-glucuronate residues in hyaluronate.. Hydrolyzes high molecular weight hyaluronic acid to produce small oligosaccharides. The chain is Hyaluronidase A from Vespula vulgaris (Yellow jacket).